The chain runs to 463 residues: Eukaryotic translation initiation factor 3 subunit E (463 aa).

Residues 224 to 407 (FNLGENQGCQ…NMLHITRPHA (184 aa)) enclose the PCI domain. Residues 432–463 (QSSVGEPRERGERGERGNKGGRGRPRTQEVAA) form a disordered region. The segment covering 437-449 (EPRERGERGERGN) has biased composition (basic and acidic residues).

It belongs to the eIF-3 subunit E family. In terms of assembly, component of the eukaryotic translation initiation factor 3 (eIF-3) complex.

The protein resides in the cytoplasm. Component of the eukaryotic translation initiation factor 3 (eIF-3) complex, which is involved in protein synthesis of a specialized repertoire of mRNAs and, together with other initiation factors, stimulates binding of mRNA and methionyl-tRNAi to the 40S ribosome. The eIF-3 complex specifically targets and initiates translation of a subset of mRNAs involved in cell proliferation. The protein is Eukaryotic translation initiation factor 3 subunit E of Cryptococcus neoformans var. neoformans serotype D (strain JEC21 / ATCC MYA-565) (Filobasidiella neoformans).